A 273-amino-acid chain; its full sequence is Shikimate dehydrogenase (NADP(+)) (273 aa).

Shikimate contacts are provided by residues 14-16 (SKS) and T61. K65 (proton acceptor) is an active-site residue. D77 provides a ligand contact to NADP(+). The shikimate site is built by N86 and D102. NADP(+) contacts are provided by residues 127–131 (GAGGA), 151–156 (NRTGAR), and M215. Y217 is a shikimate binding site. G239 lines the NADP(+) pocket.

The protein belongs to the shikimate dehydrogenase family. Homodimer.

It catalyses the reaction shikimate + NADP(+) = 3-dehydroshikimate + NADPH + H(+). It participates in metabolic intermediate biosynthesis; chorismate biosynthesis; chorismate from D-erythrose 4-phosphate and phosphoenolpyruvate: step 4/7. Its function is as follows. Involved in the biosynthesis of the chorismate, which leads to the biosynthesis of aromatic amino acids. Catalyzes the reversible NADPH linked reduction of 3-dehydroshikimate (DHSA) to yield shikimate (SA). This Thioalkalivibrio sulfidiphilus (strain HL-EbGR7) protein is Shikimate dehydrogenase (NADP(+)).